A 484-amino-acid polypeptide reads, in one-letter code: tRNA-2-methylthio-N(6)-dimethylallyladenosine synthase (484 aa).

Positions 29 to 149 (GVFHIHTLGC…LPKLLDQNRA (121 aa)) constitute an MTTase N-terminal domain. Cys38, Cys78, Cys112, Cys186, Cys190, and Cys193 together coordinate [4Fe-4S] cluster. The Radical SAM core domain maps to 172-401 (RASRISSWVA…VALQEQITEE (230 aa)). Residues 404–474 (ATFEGRDVEV…RHNLLADPDV (71 aa)) enclose the TRAM domain.

This sequence belongs to the methylthiotransferase family. MiaB subfamily. In terms of assembly, monomer. [4Fe-4S] cluster is required as a cofactor.

The protein resides in the cytoplasm. It catalyses the reaction N(6)-dimethylallyladenosine(37) in tRNA + (sulfur carrier)-SH + AH2 + 2 S-adenosyl-L-methionine = 2-methylsulfanyl-N(6)-dimethylallyladenosine(37) in tRNA + (sulfur carrier)-H + 5'-deoxyadenosine + L-methionine + A + S-adenosyl-L-homocysteine + 2 H(+). Its function is as follows. Catalyzes the methylthiolation of N6-(dimethylallyl)adenosine (i(6)A), leading to the formation of 2-methylthio-N6-(dimethylallyl)adenosine (ms(2)i(6)A) at position 37 in tRNAs that read codons beginning with uridine. This chain is tRNA-2-methylthio-N(6)-dimethylallyladenosine synthase, found in Bifidobacterium longum subsp. infantis (strain ATCC 15697 / DSM 20088 / JCM 1222 / NCTC 11817 / S12).